A 214-amino-acid polypeptide reads, in one-letter code: Probable GTP-binding protein EngB (214 aa).

In terms of domain architecture, EngB-type G spans 22–194 (NLPEIAFAGR…WARIDALLSP (173 aa)). Residues 30–37 (GRSNVGKS), 57–61 (GRTQL), 75–78 (DLPG), 142–145 (TKCD), and 173–175 (FSA) each bind GTP. Mg(2+) contacts are provided by serine 37 and threonine 59.

This sequence belongs to the TRAFAC class TrmE-Era-EngA-EngB-Septin-like GTPase superfamily. EngB GTPase family. It depends on Mg(2+) as a cofactor.

Its function is as follows. Necessary for normal cell division and for the maintenance of normal septation. The protein is Probable GTP-binding protein EngB of Citrifermentans bemidjiense (strain ATCC BAA-1014 / DSM 16622 / JCM 12645 / Bem) (Geobacter bemidjiensis).